A 387-amino-acid polypeptide reads, in one-letter code: Anhydro-N-acetylmuramic acid kinase (387 aa).

17–24 (GTSMDGVD) contacts ATP.

This sequence belongs to the anhydro-N-acetylmuramic acid kinase family.

The catalysed reaction is 1,6-anhydro-N-acetyl-beta-muramate + ATP + H2O = N-acetyl-D-muramate 6-phosphate + ADP + H(+). The protein operates within amino-sugar metabolism; 1,6-anhydro-N-acetylmuramate degradation. It participates in cell wall biogenesis; peptidoglycan recycling. Its function is as follows. Catalyzes the specific phosphorylation of 1,6-anhydro-N-acetylmuramic acid (anhMurNAc) with the simultaneous cleavage of the 1,6-anhydro ring, generating MurNAc-6-P. Is required for the utilization of anhMurNAc either imported from the medium or derived from its own cell wall murein, and thus plays a role in cell wall recycling. This Burkholderia mallei (strain ATCC 23344) protein is Anhydro-N-acetylmuramic acid kinase.